A 210-amino-acid polypeptide reads, in one-letter code: Pyridoxine/pyridoxamine 5'-phosphate oxidase (210 aa).

Residues 7-10 and K65 contribute to the substrate site; that span reads REDY. Residues 60 to 65, 75 to 76, R81, K82, and Q104 contribute to the FMN site; these read RMVLLK and FT. The substrate site is built by Y122, R126, and S130. Residues 139–140 and W183 contribute to the FMN site; that span reads QS. 189 to 191 contacts substrate; sequence RLH. R193 contributes to the FMN binding site.

This sequence belongs to the pyridoxamine 5'-phosphate oxidase family. As to quaternary structure, homodimer. Requires FMN as cofactor.

It catalyses the reaction pyridoxamine 5'-phosphate + O2 + H2O = pyridoxal 5'-phosphate + H2O2 + NH4(+). It carries out the reaction pyridoxine 5'-phosphate + O2 = pyridoxal 5'-phosphate + H2O2. It functions in the pathway cofactor metabolism; pyridoxal 5'-phosphate salvage; pyridoxal 5'-phosphate from pyridoxamine 5'-phosphate: step 1/1. Its pathway is cofactor metabolism; pyridoxal 5'-phosphate salvage; pyridoxal 5'-phosphate from pyridoxine 5'-phosphate: step 1/1. Catalyzes the oxidation of either pyridoxine 5'-phosphate (PNP) or pyridoxamine 5'-phosphate (PMP) into pyridoxal 5'-phosphate (PLP). This chain is Pyridoxine/pyridoxamine 5'-phosphate oxidase, found in Neisseria meningitidis serogroup C (strain 053442).